Reading from the N-terminus, the 221-residue chain is UPF0502 protein CPS_0106 (221 aa).

Belongs to the UPF0502 family.

This chain is UPF0502 protein CPS_0106, found in Colwellia psychrerythraea (strain 34H / ATCC BAA-681) (Vibrio psychroerythus).